A 499-amino-acid chain; its full sequence is Glycerol kinase (499 aa).

Residue Thr13 coordinates ADP. Thr13, Thr14, and Ser15 together coordinate ATP. Sn-glycerol 3-phosphate is bound at residue Thr13. Residue Arg17 participates in ADP binding. Sn-glycerol 3-phosphate is bound by residues Arg83, Glu84, Tyr135, and Asp245. Positions 83, 84, 135, 245, and 246 each coordinate glycerol. Positions 267 and 310 each coordinate ADP. 4 residues coordinate ATP: Thr267, Gly310, Gln314, and Gly411. ADP contacts are provided by Gly411 and Asn415.

It belongs to the FGGY kinase family.

It catalyses the reaction glycerol + ATP = sn-glycerol 3-phosphate + ADP + H(+). The protein operates within polyol metabolism; glycerol degradation via glycerol kinase pathway; sn-glycerol 3-phosphate from glycerol: step 1/1. Its activity is regulated as follows. Inhibited by fructose 1,6-bisphosphate (FBP). Functionally, key enzyme in the regulation of glycerol uptake and metabolism. Catalyzes the phosphorylation of glycerol to yield sn-glycerol 3-phosphate. This chain is Glycerol kinase, found in Stenotrophomonas maltophilia (strain R551-3).